Here is a 284-residue protein sequence, read N- to C-terminus: Diaminopimelate epimerase (284 aa).

2 residues coordinate substrate: asparagine 13 and asparagine 70. The Proton donor role is filled by cysteine 79. Substrate contacts are provided by residues 80–81 (GN), asparagine 167, asparagine 200, and 218–219 (ER). Cysteine 227 serves as the catalytic Proton acceptor. Residue 228–229 (GT) coordinates substrate.

It belongs to the diaminopimelate epimerase family. As to quaternary structure, homodimer.

It is found in the cytoplasm. The enzyme catalyses (2S,6S)-2,6-diaminopimelate = meso-2,6-diaminopimelate. Its pathway is amino-acid biosynthesis; L-lysine biosynthesis via DAP pathway; DL-2,6-diaminopimelate from LL-2,6-diaminopimelate: step 1/1. Functionally, catalyzes the stereoinversion of LL-2,6-diaminopimelate (L,L-DAP) to meso-diaminopimelate (meso-DAP), a precursor of L-lysine and an essential component of the bacterial peptidoglycan. The chain is Diaminopimelate epimerase from Prochlorococcus marinus (strain NATL1A).